Reading from the N-terminus, the 799-residue chain is Heat shock protein 90-6, mitochondrial (799 aa).

A mitochondrion-targeting transit peptide spans 1–48 (MIRLSKRSVSTLLRSGNQSFRIAAAASTSRSSPSATDVKRSDTESRWY). Positions 23-35 (AAAASTSRSSPSA) are enriched in low complexity. The segment at 23-61 (AAAASTSRSSPSATDVKRSDTESRWYSSLTNGQSKNSGS) is disordered. Residues 46–61 (RWYSSLTNGQSKNSGS) are compositionally biased toward polar residues. Residues E124, N128, D170, M175, 190–191 (SG), 214–219 (QFGVGF), and T269 contribute to the ATP site. Residues 314 to 337 (EVEVEDDPTETKKDDQDDQTEKKK) are disordered. Residues 322–334 (TETKKDDQDDQTE) show a composition bias toward basic and acidic residues. Residue R464 participates in ATP binding. Positions 766–777 (SPEVQPQQQQMA) are enriched in polar residues. A disordered region spans residues 766–799 (SPEVQPQQQQMAHSHDAETFEAEVVEPVEVDGKK). Over residues 784 to 799 (TFEAEVVEPVEVDGKK) the composition is skewed to acidic residues.

Belongs to the heat shock protein 90 family. In terms of assembly, interacts with P23-1.

It localises to the mitochondrion. In terms of biological role, molecular chaperone which stabilizes unfolding protein intermediates and functions as a folding molecular chaperone that assists the non-covalent folding of proteins in an ATP-dependent manner. In Arabidopsis thaliana (Mouse-ear cress), this protein is Heat shock protein 90-6, mitochondrial.